We begin with the raw amino-acid sequence, 577 residues long: Origin recognition complex subunit 2 (577 aa).

Residues 1-100 (MSKPELKEDK…GNKVYSFQNR (100 aa)) form an Involved in LRWD1-binding repeat. Positions 81–199 (SLKNGSATGG…DDEGVAQEHE (119 aa)) are disordered. A Phosphothreonine modification is found at Thr116. A phosphoserine mark is found at Ser122 and Ser138. Residues 143-157 (SASDKVQPKNNDKSE) show a composition bias toward basic and acidic residues. Residues 188–199 (SEDDEGVAQEHE) show a composition bias toward acidic residues. Thr226 bears the Phosphothreonine mark. Phosphoserine occurs at positions 248 and 280.

This sequence belongs to the ORC2 family. Component of ORC, a complex composed of at least 6 subunits: ORC1, ORC2, ORC3, ORC4, ORC5 and ORC6. ORC is regulated in a cell-cycle dependent manner. It is sequentially assembled at the exit from anaphase of mitosis and disassembled as cells enter S phase. Interacts with DBF4. Interacts with MCM10. Interacts with LRWD1 throughout the cell cycle; this interaction, which occurs only with non-ubiquitinated form of LRWD1, prevents LRWD1 ubiquitination and hence stabilizes the protein. Interacts with POLQ.

It is found in the nucleus. Its function is as follows. Component of the origin recognition complex (ORC) that binds origins of replication. DNA-binding is ATP-dependent. The specific DNA sequences that define origins of replication have not been identified yet. ORC is required to assemble the pre-replication complex necessary to initiate DNA replication. Binds histone H3 and H4 trimethylation marks H3K9me3, H3K20me3 and H4K27me3. Stabilizes LRWD1, by protecting it from ubiquitin-mediated proteasomal degradation. Also stabilizes ORC3. The protein is Origin recognition complex subunit 2 (ORC2) of Homo sapiens (Human).